A 73-amino-acid chain; its full sequence is Conotoxin Leo-O2 (73 aa).

The first 22 residues, 1–22 (MKLTCVLIIAVLFLTACQLVTA), serve as a signal peptide directing secretion. The propeptide occupies 23-47 (DYSGDEQQYRAMRLIDAMRNFGDTR). Intrachain disulfides connect cysteine 49–cysteine 59, cysteine 56–cysteine 64, and cysteine 58–cysteine 69.

The protein belongs to the conotoxin O1 superfamily. In terms of tissue distribution, expressed by the venom duct.

The protein resides in the secreted. This chain is Conotoxin Leo-O2, found in Conus leopardus (Leopard cone).